We begin with the raw amino-acid sequence, 121 residues long: Large ribosomal subunit protein bL12 (121 aa).

This sequence belongs to the bacterial ribosomal protein bL12 family. In terms of assembly, homodimer. Part of the ribosomal stalk of the 50S ribosomal subunit. Forms a multimeric L10(L12)X complex, where L10 forms an elongated spine to which 2 to 4 L12 dimers bind in a sequential fashion. Binds GTP-bound translation factors.

In terms of biological role, forms part of the ribosomal stalk which helps the ribosome interact with GTP-bound translation factors. Is thus essential for accurate translation. The protein is Large ribosomal subunit protein bL12 of Shewanella baltica (strain OS223).